Here is a 191-residue protein sequence, read N- to C-terminus: Large ribosomal subunit protein uL29m (191 aa).

The protein belongs to the universal ribosomal protein uL29 family. As to quaternary structure, component of the mitochondrial large ribosomal subunit. Mature mitochondrial ribosomes consist of a small (37S) and a large (54S) subunit. The 37S subunit contains at least 33 different proteins and 1 molecule of RNA (15S). The 54S subunit contains at least 45 different proteins and 1 molecule of RNA (21S).

It localises to the mitochondrion. The chain is Large ribosomal subunit protein uL29m (MRPL4) from Sclerotinia sclerotiorum (strain ATCC 18683 / 1980 / Ss-1) (White mold).